The primary structure comprises 296 residues: UDP-N-acetylenolpyruvoylglucosamine reductase (296 aa).

The FAD-binding PCMH-type domain occupies 26-191 (RIGGPANYFK…LSATFRLSKS (166 aa)). The active site involves Arg-170. Cys-218 serves as the catalytic Proton donor. The active site involves Glu-287.

This sequence belongs to the MurB family. The cofactor is FAD.

The protein resides in the cytoplasm. The catalysed reaction is UDP-N-acetyl-alpha-D-muramate + NADP(+) = UDP-N-acetyl-3-O-(1-carboxyvinyl)-alpha-D-glucosamine + NADPH + H(+). It functions in the pathway cell wall biogenesis; peptidoglycan biosynthesis. Functionally, cell wall formation. In Chlamydia felis (strain Fe/C-56) (Chlamydophila felis), this protein is UDP-N-acetylenolpyruvoylglucosamine reductase.